Reading from the N-terminus, the 186-residue chain is ATP-dependent protease subunit HslV (186 aa).

Residue threonine 13 is part of the active site. 3 residues coordinate Na(+): alanine 167, cysteine 170, and threonine 173.

Belongs to the peptidase T1B family. HslV subfamily. A double ring-shaped homohexamer of HslV is capped on each side by a ring-shaped HslU homohexamer. The assembly of the HslU/HslV complex is dependent on binding of ATP.

The protein localises to the cytoplasm. The catalysed reaction is ATP-dependent cleavage of peptide bonds with broad specificity.. Its activity is regulated as follows. Allosterically activated by HslU binding. Protease subunit of a proteasome-like degradation complex believed to be a general protein degrading machinery. The chain is ATP-dependent protease subunit HslV from Allorhizobium ampelinum (strain ATCC BAA-846 / DSM 112012 / S4) (Agrobacterium vitis (strain S4)).